The sequence spans 637 residues: Sodium-dependent phosphate transport protein 2A (637 aa).

At 1–103 the chain is on the cytoplasmic side; that stretch reads MMSYSERLGG…LAQVGTKLLK (103 aa). 2 positions are modified to phosphoserine: serine 14 and serine 34. The chain crosses the membrane as a helical span at residues 104-125; that stretch reads VPLMLGFLYLFVCSLDVLSSAF. Residues 126 to 145 are Extracellular-facing; that stretch reads QLAGGKVAGDIFKDNAILSN. A helical membrane pass occupies residues 146–163; it reads PVAGLVVGILVTVLVQSS. At 164-216 the chain is on the cytoplasmic side; sequence STSTSIIVSMVSSGLLEVSSAIPIIMGSNIGTSVTNTIVALMQAGDRTDFRRA. A helical membrane pass occupies residues 217-236; sequence FAGATVHDCFNWLSVLVLLP. Cystine bridges form between cysteine 225–cysteine 520 and cysteine 306–cysteine 334. Residues 237 to 345 lie on the Extracellular side of the membrane; that stretch reads LEAATGYLHH…HIFVDTGLPD (109 aa). N-linked (GlcNAc...) asparagine glycans are attached at residues asparagine 298 and asparagine 328. Residues 346–368 traverse the membrane as a helical segment; sequence LAVGLILLAGSLVVLCTCLILLV. Topologically, residues 369-410 are cytoplasmic; it reads KMLNSLLKGQVANVIQKVINTDFPAPFTWVTGYFAMVVGASM. A helical transmembrane segment spans residues 411–434; that stretch reads TFVVQSSSVFTSAITPLIGLGVIS. Over 435-464 the chain is Extracellular; that stretch reads IERAYPLTLGSNIGTTTTAILAALASPREK. A helical membrane pass occupies residues 465 to 485; the sequence is LSSSFQIALCHFFFNISGILL. Residues 486–511 are Cytoplasmic-facing; the sequence is WYPLPCTRLPIRMAKALGKRTAKYRW. Threonine 506 carries the phosphothreonine; by PKC modification. The helical transmembrane segment at 512-532 threads the bilayer; that stretch reads FAVLYLLVCFLLLPSLVFGIS. Over 533–537 the chain is Extracellular; that stretch reads MAGWQ. Residues 538 to 559 traverse the membrane as a helical segment; the sequence is AMVGVGTPFGALLAFVVLVNVL. Residues 560–637 are Cytoplasmic-facing; that stretch reads QSRSPGHLPK…LPAHHNATRL (78 aa). Phosphoserine is present on serine 605. At threonine 621 the chain carries Phosphothreonine. Position 623 is a phosphoserine (serine 623).

It belongs to the SLC34A transporter family. In terms of assembly, interacts via its C-terminal region with NHERF4. Interacts with NHERF1. Interacts with TMEM174; regulates SLC34A1 internalization by PTH and FGF23. Kidney.

It localises to the apical cell membrane. The protein resides in the cell membrane. It catalyses the reaction 3 Na(+)(out) + phosphate(out) = 3 Na(+)(in) + phosphate(in). Transport activity is significantly increased in response to dietary phosphate deprivation. In terms of biological role, involved in actively transporting phosphate into cells via Na(+) cotransport in the renal brush border membrane. The cotransport has a Na(+):Pi stoichiometry of 3:1 and is electrogenic. The chain is Sodium-dependent phosphate transport protein 2A from Rattus norvegicus (Rat).